A 448-amino-acid polypeptide reads, in one-letter code: Probable metal transport system membrane protein CPn_0347/CP_0413/CPj0347/CpB0354 (448 aa).

The next 8 helical transmembrane spans lie at Phe-15 to Ser-35, Ala-47 to Ala-67, Ile-69 to Phe-89, Ser-100 to Val-120, Phe-144 to Trp-164, Leu-193 to Ser-213, Ile-233 to Val-253, and Leu-270 to Phe-290.

Belongs to the ABC-3 integral membrane protein family.

The protein localises to the cell inner membrane. Its function is as follows. Part of an ATP-driven transport system CPn_0346/CPn_0347/CPn_0348/CPn_0349 for a metal. The sequence is that of Probable metal transport system membrane protein CPn_0347/CP_0413/CPj0347/CpB0354 from Chlamydia pneumoniae (Chlamydophila pneumoniae).